We begin with the raw amino-acid sequence, 462 residues long: MEYRIERDTLGEIKVPADKLWAAQTQRSKENFPIGTEQMPLEIVKAFAILKKSAALSNQKLGKLSEEKAEAIVVAADEIIAGKWNEHFPLVVWQTGSGTQSNMNVNEVIANRGNQILKEKGSDVHIHPNDDVNMSQSSNDTFPTALHVACVLAVENHVLPAITKLKETLAEKVTAFEHIIKIGRTHLQDATPLTLGQEISGWHRMLEKTERMIAESNTYMKELAIGGTAVGTGINAHPKFGEMVSEEISQFTGKQFISAPNKFHALTSHDEVVYTHGALKALAADLMKIANDVRWLASGPRSGLGEIIIPANEPGSSIMPGKVNPTQSEALTMVVAQVMGNDATIGFAASQGNFELNVFKPVIAYNFLQSAHLLADAIVSFNDNCAVGIEADEEIIKENVNRSLMLVTALNPHIGYENAAKIAKHAHKEGLTLKEAALQSGLLTEEQFNEIVDPKKMIAPKE.

Substrate is bound by residues 97-99 (SGT), 127-130 (HPND), 137-139 (SSN), and T185. Residue H186 is the Proton donor/acceptor of the active site. S316 is a catalytic residue. Residues S317 and 322–324 (KVN) contribute to the substrate site.

Belongs to the class-II fumarase/aspartase family. Fumarase subfamily. In terms of assembly, homotetramer.

Its subcellular location is the cytoplasm. It catalyses the reaction (S)-malate = fumarate + H2O. The protein operates within carbohydrate metabolism; tricarboxylic acid cycle; (S)-malate from fumarate: step 1/1. Functionally, involved in the TCA cycle. Catalyzes the stereospecific interconversion of fumarate to L-malate. This Bacillus anthracis protein is Fumarate hydratase class II.